Consider the following 458-residue polypeptide: Dihydrolipoyl dehydrogenase (458 aa).

FAD is bound by residues 30–38 (DKGKLGGTC), Lys47, and Ala112. An intrachain disulfide couples Cys38 to Cys43. Residues 177–181 (GGGVI), Glu200, and 263–266 (AIGR) each bind NAD(+). FAD contacts are provided by Asp305 and Ala313. The active-site Proton acceptor is His437.

This sequence belongs to the class-I pyridine nucleotide-disulfide oxidoreductase family. As to quaternary structure, homodimer. The cofactor is FAD.

It localises to the cytoplasm. The catalysed reaction is N(6)-[(R)-dihydrolipoyl]-L-lysyl-[protein] + NAD(+) = N(6)-[(R)-lipoyl]-L-lysyl-[protein] + NADH + H(+). It functions in the pathway ketone degradation; acetoin degradation. The sequence is that of Dihydrolipoyl dehydrogenase (acoL) from Bacillus subtilis (strain 168).